The following is a 400-amino-acid chain: CinA-like protein (400 aa).

Belongs to the CinA family.

This Escherichia coli (strain 55989 / EAEC) protein is CinA-like protein.